Consider the following 273-residue polypeptide: Endochitinase EP3 (273 aa).

An N-terminal signal peptide occupies residues 1 to 28 (MLTPTISKSISLVTILLVLQAFSNTTKA). N-linked (GlcNAc...) asparagine glycosylation is present at Asn-24. Positions 29–63 (QNCGCSSELCCSQFGFCGNTSDYCGVGCQQGPCFA) constitute a Chitin-binding type-1 domain. 4 disulfides stabilise this stretch: Cys-31/Cys-39, Cys-33/Cys-45, Cys-38/Cys-52, and Cys-56/Cys-61. An N-linked (GlcNAc...) asparagine glycan is attached at Asn-47. The segment at 70-273 (VSVAEIVTQE…GVDPGNNLTC (204 aa)) is catalytic. The Proton donor role is filled by Glu-136. N-linked (GlcNAc...) asparagine glycosylation is found at Asn-157 and Asn-270.

The protein belongs to the glycosyl hydrolase 19 family. Chitinase class I subfamily. Expressed in cells surrounding embryos, stems, seedlings, pollen, roots, shoots, inflorescence, flowers, siliques and leaves. Present in seedpods and seed embryos, but not in roots, inflorescence stems, leaves and flowers.

The enzyme catalyses Random endo-hydrolysis of N-acetyl-beta-D-glucosaminide (1-&gt;4)-beta-linkages in chitin and chitodextrins.. In terms of biological role, probably involved in hypersensitive reaction upon Xanthomonas campestris infection. This is Endochitinase EP3 from Arabidopsis thaliana (Mouse-ear cress).